Reading from the N-terminus, the 231-residue chain is MKRAVVVFSGGQDSTTCLIQALHQYDEVHCVTFDYGQRHRAEIDVARELALKLGARAHKVLDVTLLNELAVSSLTRDSIPVPDYEPDADGIPNTFVPGRNILFLTLTAIYAYQVKAEAIITGVCETDFSGYPDCRDEFVKALNHAVDLGMAKEIRFETPLMWLDKAETWALADYWEKLELVRTETLTCYNGIKGDGCGQCAACNLRSNGLNHYLANKPAVMSAMKAKTGLK.

Residue 8–18 participates in ATP binding; it reads FSGGQDSTTCL. Cys-188, Cys-197, Cys-200, and Cys-203 together coordinate Zn(2+).

This sequence belongs to the QueC family. The cofactor is Zn(2+).

It carries out the reaction 7-carboxy-7-deazaguanine + NH4(+) + ATP = 7-cyano-7-deazaguanine + ADP + phosphate + H2O + H(+). It functions in the pathway purine metabolism; 7-cyano-7-deazaguanine biosynthesis. Catalyzes the ATP-dependent conversion of 7-carboxy-7-deazaguanine (CDG) to 7-cyano-7-deazaguanine (preQ(0)). This is 7-cyano-7-deazaguanine synthase from Enterobacter sp. (strain 638).